Reading from the N-terminus, the 194-residue chain is NADPH-flavin oxidoreductase (194 aa).

It belongs to the non-flavoprotein flavin reductase family. In terms of assembly, homodimer. It can form an isobutylamine N-hydroxylase two component enzyme system formed of a flavin reductase component (VlmR) and a monooxygenase component (VlmH).

It catalyses the reaction FADH2 + NADP(+) = FAD + NADPH + 2 H(+). The enzyme catalyses FMNH2 + NADP(+) = FMN + NADPH + 2 H(+). In terms of biological role, involved in the biosynthesis of the azoxy antibiotic valanimycin, which has an antitumor activity. Catalyzes the reduction of FAD/FMN to FADH(2)/FMNH(2) which are subsequently used for the hydroxylation of isobutylamine by the isobutylamine N-hydroxylase VlmH. It can reduce either FAD or flavin mononucleotide (FMN) but prefers FAD. The enzyme has a strong preference for NADPH as acceptor. In Streptomyces viridifaciens, this protein is NADPH-flavin oxidoreductase.